A 122-amino-acid chain; its full sequence is Large ribosomal subunit protein uL18 (122 aa).

Belongs to the universal ribosomal protein uL18 family. Part of the 50S ribosomal subunit; part of the 5S rRNA/L5/L18/L25 subcomplex. Contacts the 5S and 23S rRNAs.

This is one of the proteins that bind and probably mediate the attachment of the 5S RNA into the large ribosomal subunit, where it forms part of the central protuberance. The polypeptide is Large ribosomal subunit protein uL18 (Citrifermentans bemidjiense (strain ATCC BAA-1014 / DSM 16622 / JCM 12645 / Bem) (Geobacter bemidjiensis)).